The sequence spans 197 residues: Dephospho-CoA kinase (197 aa).

The DPCK domain maps to 3–197 (VLGLTGSIGL…IDELRGQRGS (195 aa)). 11–16 (GLGKST) lines the ATP pocket.

It belongs to the CoaE family.

Its subcellular location is the cytoplasm. The enzyme catalyses 3'-dephospho-CoA + ATP = ADP + CoA + H(+). It functions in the pathway cofactor biosynthesis; coenzyme A biosynthesis; CoA from (R)-pantothenate: step 5/5. Catalyzes the phosphorylation of the 3'-hydroxyl group of dephosphocoenzyme A to form coenzyme A. This is Dephospho-CoA kinase from Mesorhizobium japonicum (strain LMG 29417 / CECT 9101 / MAFF 303099) (Mesorhizobium loti (strain MAFF 303099)).